The chain runs to 485 residues: REST corepressor 1 (485 aa).

Disordered regions lie at residues 1–26 (MPAM…ASAS) and 49–110 (AAAS…VGPQ). Composition is skewed to low complexity over residues 49 to 64 (AAAS…AAAA) and 74 to 95 (AAAA…SGSS). Positions 78-257 (PNGNSSSNSW…RHARKQKRER (180 aa)) are interaction with HDAC1. An ELM2 domain is found at 103-189 (GGMRVGPQYQ…KSLADLPNFT (87 aa)). Lys122 is covalently cross-linked (Glycyl lysine isopeptide (Lys-Gly) (interchain with G-Cter in SUMO2)). Phosphoserine is present on Ser127. Residues 190–241 (PFPDEWTVEDKVLFEQAFSFHGKTFHRIQQMLPDKSIASLVKFYYSWKKTRT) enclose the SANT 1 domain. Positions 244 to 273 (SVMDRHARKQKREREESEDELEEANGNNPI) form a coiled coil. A disordered region spans residues 244–314 (SVMDRHARKQ…AKNRAKRKPP (71 aa)). Ser260 bears the Phosphoserine mark. Positions 278-288 (DQNKESKKEVP) are enriched in basic and acidic residues. Positions 296-384 (VKKEKHSTQA…LPEVIQKCNA (89 aa)) are interaction with KDM1A. A Glycyl lysine isopeptide (Lys-Gly) (interchain with G-Cter in SUMO2) cross-link involves residue Lys297. Residues 334-369 (ATTVLRQLDMELVSVKRQIQNIKQTNSALKEKLDGG) are a coiled coil. Positions 381-432 (KCNARWTTEEQLLAVQAIRKYGRDFQAISDVIGNKSVVQVKNFFVNYRRRFN) constitute an SANT 2 domain. A disordered region spans residues 442–485 (AEHGKEETNGPSNQKPVKSPDNSIKMPEEEDEAPVLDVRYASAS). Residues 450-463 (NGPSNQKPVKSPDN) show a composition bias toward polar residues. Ser460 bears the Phosphoserine mark. Lys466 participates in a covalent cross-link: Glycyl lysine isopeptide (Lys-Gly) (interchain with G-Cter in SUMO2).

The protein belongs to the CoREST family. As to quaternary structure, interacts directly with GFI1 and GFI1B in a RCOR/GFI/KDM1A/HDAC complex. Interacts with INMS1. Component of a BHC histone deacetylase complex that contains HDAC1, HDAC2, HMG20B/BRAF35, KDM1A, RCOR1/CoREST and PHF21A/BHC80. The BHC complex may also contain ZMYM2, ZNF217, ZMYM3, GSE1 and GTF2I. Interacts with REST. Interacts with the SMARCE1/BAF57, suggesting that the BHC complex may recruit the ATP-dependent chromatin-remodeling SWI-SNF complex. Interacts with SOX2. (Microbial infection) Interacts with herpes virus HSV-1 ICP0 protein; the interaction leads to the disruption of the BHC complex, thereby preventing the BHC complex from repressing transcription of viral genes. Post-translationally, phosphorylated by HSV-1 protein kinases in case of infection. In terms of tissue distribution, ubiquitously expressed.

The protein localises to the nucleus. In terms of biological role, essential component of the BHC complex, a corepressor complex that represses transcription of neuron-specific genes in non-neuronal cells. The BHC complex is recruited at RE1/NRSE sites by REST and acts by deacetylating and demethylating specific sites on histones, thereby acting as a chromatin modifier. In the BHC complex, it serves as a molecular beacon for the recruitment of molecular machinery, including MeCP2 and SUV39H1, that imposes silencing across a chromosomal interval. Plays a central role in demethylation of Lys-4 of histone H3 by promoting demethylase activity of KDM1A on core histones and nucleosomal substrates. It also protects KDM1A from the proteasome. Component of a RCOR/GFI/KDM1A/HDAC complex that suppresses, via histone deacetylase (HDAC) recruitment, a number of genes implicated in multilineage blood cell development and controls hematopoietic differentiation. This Homo sapiens (Human) protein is REST corepressor 1 (RCOR1).